We begin with the raw amino-acid sequence, 113 residues long: Large ribosomal subunit protein uL22 (113 aa).

The protein belongs to the universal ribosomal protein uL22 family. Part of the 50S ribosomal subunit.

Functionally, this protein binds specifically to 23S rRNA; its binding is stimulated by other ribosomal proteins, e.g. L4, L17, and L20. It is important during the early stages of 50S assembly. It makes multiple contacts with different domains of the 23S rRNA in the assembled 50S subunit and ribosome. The globular domain of the protein is located near the polypeptide exit tunnel on the outside of the subunit, while an extended beta-hairpin is found that lines the wall of the exit tunnel in the center of the 70S ribosome. The chain is Large ribosomal subunit protein uL22 from Xanthomonas axonopodis pv. citri (strain 306).